A 187-amino-acid polypeptide reads, in one-letter code: UPF0200 protein PYRAB09750 (187 aa).

7-14 (GMPGSGKG) is a binding site for ATP.

This sequence belongs to the UPF0200 family.

This chain is UPF0200 protein PYRAB09750, found in Pyrococcus abyssi (strain GE5 / Orsay).